The primary structure comprises 191 residues: Adenylate kinase (191 aa).

10–15 contributes to the ATP binding site; sequence AAGKGT. The segment at 30-59 is NMP; it reads STGDMLRAAIASGSELGQRVKGVLDRGELV. AMP contacts are provided by residues T31, R36, 57 to 59, 85 to 88, and Q92; these read ELV and GFPR. The tract at residues 126 to 136 is LID; that stretch reads KRFEEQGRPDD. Residue R127 coordinates ATP. AMP is bound by residues R133 and R144. G172 lines the ATP pocket.

The protein belongs to the adenylate kinase family. In terms of assembly, monomer.

Its subcellular location is the cytoplasm. It carries out the reaction AMP + ATP = 2 ADP. The protein operates within purine metabolism; AMP biosynthesis via salvage pathway; AMP from ADP: step 1/1. Functionally, catalyzes the reversible transfer of the terminal phosphate group between ATP and AMP. Plays an important role in cellular energy homeostasis and in adenine nucleotide metabolism. The chain is Adenylate kinase from Caulobacter vibrioides (strain ATCC 19089 / CIP 103742 / CB 15) (Caulobacter crescentus).